Consider the following 317-residue polypeptide: Protoheme IX farnesyltransferase (317 aa).

Transmembrane regions (helical) follow at residues 25-45 (FFALLKPRVMALVVFTALVGM), 54-74 (PVIGAVSLLMIAVGAGASGCL), 117-137 (LMLGLAANWLAAGLLAFTIVF), 167-189 (IGQAVVTGSVGIEGIILFLIIFI), 244-264 (LGFGGLIYGLVALLGGLAMLV), and 281-301 (AAMSLFGFSILYLFLLFSALL).

Belongs to the UbiA prenyltransferase family. Protoheme IX farnesyltransferase subfamily.

The protein resides in the cell inner membrane. It catalyses the reaction heme b + (2E,6E)-farnesyl diphosphate + H2O = Fe(II)-heme o + diphosphate. Its pathway is porphyrin-containing compound metabolism; heme O biosynthesis; heme O from protoheme: step 1/1. Its function is as follows. Converts heme B (protoheme IX) to heme O by substitution of the vinyl group on carbon 2 of heme B porphyrin ring with a hydroxyethyl farnesyl side group. The protein is Protoheme IX farnesyltransferase of Methylobacterium nodulans (strain LMG 21967 / CNCM I-2342 / ORS 2060).